The chain runs to 125 residues: Large ribosomal subunit protein bL21 (125 aa).

The protein belongs to the bacterial ribosomal protein bL21 family. As to quaternary structure, part of the 50S ribosomal subunit. Contacts protein L20.

This protein binds to 23S rRNA in the presence of protein L20. The chain is Large ribosomal subunit protein bL21 from Synechococcus sp. (strain CC9311).